The sequence spans 238 residues: Protein odd-skipped-related 2 (238 aa).

The segment at 105 to 126 (EDPPVTGQSRLSPERRPARGRL) is disordered. 3 consecutive C2H2-type zinc fingers follow at residues 134–156 (FICRFCGRHFTKSYNLLIHERTH), 162–184 (YTCDICHKAFRRQDHLRDHRYIH), and 190–212 (FKCQECGKGFCQSRTLAVHKTLH).

It belongs to the Odd C2H2-type zinc-finger protein family. In terms of tissue distribution, at the 8-somite stage, expressed in the pronephros, with weak generalized expression elsewhere. At 24 hpf, expressed in the kidney tubules and the anterior duct, and also in the gut. At 60 hpf, expressed in the tubules and the pectoral fin buds.

The protein localises to the nucleus. Its function is as follows. Transcriptional repressor. Required for pronephric kidney development. This is Protein odd-skipped-related 2 from Danio rerio (Zebrafish).